The chain runs to 280 residues: DNA repair protein RecO (280 aa).

The tract at residues 261–280 is disordered; it reads DMAHGNHTGQEDLPATASGA.

Belongs to the RecO family.

Functionally, involved in DNA repair and RecF pathway recombination. The sequence is that of DNA repair protein RecO from Mycolicibacterium smegmatis (strain ATCC 700084 / mc(2)155) (Mycobacterium smegmatis).